We begin with the raw amino-acid sequence, 119 residues long: uncharacterized protein (119 aa).

Residues 1 to 22 (MQGQAGKRKTDGKVPSNTEQNC) form a disordered region.

This is an uncharacterized protein from Saccharomyces cerevisiae (strain ATCC 204508 / S288c) (Baker's yeast).